Reading from the N-terminus, the 288-residue chain is MAEKRHTRDSEAQRLPDSFKDSPSKGLGPCGWILVAFSFLFTVITFPISIWMCIKIIKEYERAIIFRLGRILQGGAKGPGLFFILPCTDSFIKVDMRTISFDIPPQEILTKDSVTISVDGVVYYRVQNATLAVANITNADSATRLLAQTTLRNVLGTKNLSQILSDREEIAHNMQSTLDDATDAWGIKVERVEIKDVKLPVQLQRAMAAEAEASREARAKVIAAEGEMNASRALKEASMVITESPAALQLRYLQTLTTIAAEKNSTIVFPLPIDMLQGIIGAKHSHLG.

The segment at 1 to 22 (MAEKRHTRDSEAQRLPDSFKDS) is disordered. At 1-25 (MAEKRHTRDSEAQRLPDSFKDSPSK) the chain is on the cytoplasmic side. Position 10 is a phosphoserine; by PKA (S10). S18 is modified (phosphoserine). Residues 26 to 54 (GLGPCGWILVAFSFLFTVITFPISIWMCI) lie within the membrane without spanning it. C30 carries S-palmitoyl cysteine lipidation. Residues 55–288 (KIIKEYERAI…IIGAKHSHLG (234 aa)) lie on the Cytoplasmic side of the membrane. A lipid anchor (S-palmitoyl cysteine; partial) is attached at C87. A phosphoserine mark is found at S161 and S244. The segment at 265-273 (STIVFPLPI) is required for homooligomerization. Residues 267–269 (IVF) form a required for lipid raft association region. An interaction with LANCL1 region spans residues 273–287 (IDMLQGIIGAKHSHL).

It belongs to the band 7/mec-2 family. Homodimer and higher order homooligomer. The homodimer is banana-shaped. Interacts with ASIC1, ASIC2 and ASIC3. Interacts with LANCL1. Interacts with SLC2A1. Interacts with SLC4A1; this interaction positively regulates SLC4A1 activity. Identified in large complexes with SLC40A1, SLC14A1, SLC29A1 and AQP1. Interacts with STOML1; may redistribute STOM from the plasma membrane to late endosomes. As to expression, detected in erythrocytes (at protein level). Widely expressed.

Its subcellular location is the cell membrane. The protein resides in the cytoplasm. The protein localises to the cytoskeleton. It localises to the membrane raft. It is found in the melanosome. Its subcellular location is the cytoplasmic vesicle. In terms of biological role, regulates ion channel activity and transmembrane ion transport. Regulates ASIC2 and ASIC3 channel activity. In Homo sapiens (Human), this protein is Stomatin.